The sequence spans 313 residues: Ornithine carbamoyltransferase (313 aa).

Residues 57 to 60, Gln-84, Arg-108, and 135 to 138 contribute to the carbamoyl phosphate site; these read STRT and HPTQ. Residues Asn-167, Asp-231, and 235 to 236 each bind L-ornithine; that span reads SM. Residues 272 to 273 and Arg-300 contribute to the carbamoyl phosphate site; that span reads CL.

It belongs to the aspartate/ornithine carbamoyltransferase superfamily. OTCase family.

It localises to the cytoplasm. It carries out the reaction carbamoyl phosphate + L-ornithine = L-citrulline + phosphate + H(+). Its pathway is amino-acid biosynthesis; L-arginine biosynthesis; L-arginine from L-ornithine and carbamoyl phosphate: step 1/3. Functionally, reversibly catalyzes the transfer of the carbamoyl group from carbamoyl phosphate (CP) to the N(epsilon) atom of ornithine (ORN) to produce L-citrulline. The chain is Ornithine carbamoyltransferase from Pseudothermotoga lettingae (strain ATCC BAA-301 / DSM 14385 / NBRC 107922 / TMO) (Thermotoga lettingae).